The sequence spans 393 residues: S-adenosylmethionine synthase (393 aa).

Glu-9 contacts Mg(2+). Residue His-15 coordinates ATP. Residue Glu-43 coordinates K(+). L-methionine-binding residues include Glu-56 and Gln-99. ATP-binding positions include 167 to 169 (DGK), 235 to 238 (SGRF), Asp-246, 252 to 253 (RK), Ala-269, Lys-273, and Lys-277. Residue Asp-246 participates in L-methionine binding. L-methionine is bound at residue Lys-277.

The protein belongs to the AdoMet synthase family. Homotetramer. It depends on Mn(2+) as a cofactor. The cofactor is Mg(2+). Co(2+) serves as cofactor. Requires K(+) as cofactor.

The protein resides in the cytoplasm. The catalysed reaction is L-methionine + ATP + H2O = S-adenosyl-L-methionine + phosphate + diphosphate. It participates in amino-acid biosynthesis; S-adenosyl-L-methionine biosynthesis; S-adenosyl-L-methionine from L-methionine: step 1/1. Catalyzes the formation of S-adenosylmethionine from methionine and ATP. The reaction comprises two steps that are both catalyzed by the same enzyme: formation of S-adenosylmethionine (AdoMet) and triphosphate, and subsequent hydrolysis of the triphosphate. The protein is S-adenosylmethionine synthase (SAMS) of Brassica rapa subsp. pekinensis (Chinese cabbage).